A 549-amino-acid chain; its full sequence is Thermosome subunit alpha (549 aa).

Residues 529–549 are disordered; the sequence is EGRQGAECPPNGCMGGMDMRM.

Belongs to the TCP-1 chaperonin family. In terms of assembly, forms a Heterooligomeric complex of two stacked eight-membered rings.

In terms of biological role, molecular chaperone; binds unfolded polypeptides in vitro, and has a weak ATPase activity. In Thermococcus sp. (strain KS-8), this protein is Thermosome subunit alpha (thsA).